The primary structure comprises 181 residues: Small ribosomal subunit protein uS4 (181 aa).

The S4 RNA-binding domain maps to 108–172 (RRLQTQVYRR…SPLVSDIHSE (65 aa)).

This sequence belongs to the universal ribosomal protein uS4 family. In terms of assembly, part of the 30S ribosomal subunit. Contacts protein S5. The interaction surface between S4 and S5 is involved in control of translational fidelity.

Functionally, one of the primary rRNA binding proteins, it binds directly to 16S rRNA where it nucleates assembly of the body of the 30S subunit. With S5 and S12 plays an important role in translational accuracy. This chain is Small ribosomal subunit protein uS4, found in Methanospirillum hungatei JF-1 (strain ATCC 27890 / DSM 864 / NBRC 100397 / JF-1).